A 100-amino-acid chain; its full sequence is NADH-quinone oxidoreductase subunit K (100 aa).

3 helical membrane-spanning segments follow: residues 2–22 (ISLN…LFGI), 28–48 (ILML…GFVA), and 63–83 (LFII…VVIW).

The protein belongs to the complex I subunit 4L family. In terms of assembly, NDH-1 is composed of 14 different subunits. Subunits NuoA, H, J, K, L, M, N constitute the membrane sector of the complex.

It is found in the cell inner membrane. It carries out the reaction a quinone + NADH + 5 H(+)(in) = a quinol + NAD(+) + 4 H(+)(out). Its function is as follows. NDH-1 shuttles electrons from NADH, via FMN and iron-sulfur (Fe-S) centers, to quinones in the respiratory chain. The immediate electron acceptor for the enzyme in this species is believed to be ubiquinone. Couples the redox reaction to proton translocation (for every two electrons transferred, four hydrogen ions are translocated across the cytoplasmic membrane), and thus conserves the redox energy in a proton gradient. The polypeptide is NADH-quinone oxidoreductase subunit K (Helicobacter hepaticus (strain ATCC 51449 / 3B1)).